The following is a 234-amino-acid chain: uncharacterized protein (234 aa).

This is an uncharacterized protein from Acheta domesticus (House cricket).